The sequence spans 354 residues: Probable serine acetyltransferase 2 (354 aa).

The protein belongs to the transferase hexapeptide repeat family. As to quaternary structure, homomultimer.

It catalyses the reaction L-serine + acetyl-CoA = O-acetyl-L-serine + CoA. It participates in amino-acid biosynthesis; L-cysteine biosynthesis; L-cysteine from L-serine: step 1/2. The protein is Probable serine acetyltransferase 2 (SAT2) of Oryza sativa subsp. japonica (Rice).